The primary structure comprises 42 residues: Phospholipase A1 (42 aa).

It belongs to the AB hydrolase superfamily. Lipase family. Post-translationally, contains six disulfide bonds. Expressed by the venom gland.

The protein resides in the secreted. The enzyme catalyses a 1,2-diacyl-sn-glycero-3-phosphocholine + H2O = a 2-acyl-sn-glycero-3-phosphocholine + a fatty acid + H(+). In terms of biological role, catalyzes the hydrolysis of phosphatidylcholine with phospholipase A1 activity. May act as an allergen and induce hemolytic activity. This chain is Phospholipase A1, found in Polistes gallicus (Paper wasp).